A 177-amino-acid chain; its full sequence is Acireductone dioxygenase (177 aa).

The segment at M1–P23 is disordered. 4 residues coordinate Fe(2+): H86, H88, E92, and H131. Residues H86, H88, E92, and H131 each coordinate Ni(2+).

It belongs to the acireductone dioxygenase (ARD) family. Fe(2+) is required as a cofactor. The cofactor is Ni(2+).

The protein resides in the cytoplasm. Its subcellular location is the nucleus. The catalysed reaction is 1,2-dihydroxy-5-(methylsulfanyl)pent-1-en-3-one + O2 = 4-methylsulfanyl-2-oxobutanoate + formate + 2 H(+). The enzyme catalyses 1,2-dihydroxy-5-(methylsulfanyl)pent-1-en-3-one + O2 = 3-(methylsulfanyl)propanoate + CO + formate + 2 H(+). It functions in the pathway amino-acid biosynthesis; L-methionine biosynthesis via salvage pathway; L-methionine from S-methyl-5-thio-alpha-D-ribose 1-phosphate: step 5/6. In terms of biological role, catalyzes 2 different reactions between oxygen and the acireductone 1,2-dihydroxy-3-keto-5-methylthiopentene (DHK-MTPene) depending upon the metal bound in the active site. Fe-containing acireductone dioxygenase (Fe-ARD) produces formate and 2-keto-4-methylthiobutyrate (KMTB), the alpha-ketoacid precursor of methionine in the methionine recycle pathway. Ni-containing acireductone dioxygenase (Ni-ARD) produces methylthiopropionate, carbon monoxide and formate, and does not lie on the methionine recycle pathway. In Branchiostoma floridae (Florida lancelet), this protein is Acireductone dioxygenase.